Consider the following 205-residue polypeptide: MSKRIAAKHKIDRRMGENIWGRSKSPVNRREYGPGQHGQRRKGKLSDFGVQLRAKQKLKGYYGSIGEKQFHKVYVEASRLKGDTGANLIGLLERRLDAVVYRAKFVPTIFAARQFVSHGHVKVNGQRVNIPSYLVKVGDVVEVKEASRQMTLVLEAQQLGERDVPDYIELDAGKLAARFARIPELNEVPYPVQMEPNLVVEFYSR.

A disordered region spans residues 18–46 (NIWGRSKSPVNRREYGPGQHGQRRKGKLS). Positions 94 to 157 (RRLDAVVYRA…RQMTLVLEAQ (64 aa)) constitute an S4 RNA-binding domain.

This sequence belongs to the universal ribosomal protein uS4 family. In terms of assembly, part of the 30S ribosomal subunit. Contacts protein S5. The interaction surface between S4 and S5 is involved in control of translational fidelity.

In terms of biological role, one of the primary rRNA binding proteins, it binds directly to 16S rRNA where it nucleates assembly of the body of the 30S subunit. With S5 and S12 plays an important role in translational accuracy. This is Small ribosomal subunit protein uS4 from Xanthobacter autotrophicus (strain ATCC BAA-1158 / Py2).